The following is a 488-amino-acid chain: Glycogen synthase (488 aa).

Arg20 serves as a coordination point for ADP-alpha-D-glucose.

Belongs to the glycosyltransferase 1 family. Bacterial/plant glycogen synthase subfamily.

The catalysed reaction is [(1-&gt;4)-alpha-D-glucosyl](n) + ADP-alpha-D-glucose = [(1-&gt;4)-alpha-D-glucosyl](n+1) + ADP + H(+). It participates in glycan biosynthesis; glycogen biosynthesis. In terms of biological role, synthesizes alpha-1,4-glucan chains using ADP-glucose. The sequence is that of Glycogen synthase from Chlorobaculum tepidum (strain ATCC 49652 / DSM 12025 / NBRC 103806 / TLS) (Chlorobium tepidum).